The sequence spans 1168 residues: Homeodomain-interacting protein kinase 2 (1168 aa).

Ser-16 carries the post-translational modification Phosphoserine. A Glycyl lysine isopeptide (Lys-Gly) (interchain with G-Cter in SUMO); alternate cross-link involves residue Lys-32. Residue Lys-32 forms a Glycyl lysine isopeptide (Lys-Gly) (interchain with G-Cter in SUMO2); alternate linkage. Positions 97 to 230 are transcriptional corepression; the sequence is SASSTSVTGQ…TNEIVAIKIL (134 aa). A phosphoserine mark is found at Ser-118 and Ser-135. Thr-141 carries the phosphothreonine modification. Positions 189 to 520 are interaction with DAXX; the sequence is HEVLCSMTNT…DADKRITPIE (332 aa). The Protein kinase domain maps to 199 to 527; the sequence is YEVLEFLGRG…PIETLNHPFV (329 aa). ATP contacts are provided by residues 205 to 213 and Lys-228; that span reads LGRGTFGQV. Phosphothreonine occurs at positions 252 and 273. The active-site Proton acceptor is Asp-324. A Phosphotyrosine modification is found at Tyr-361. Phosphoserine is present on Ser-441. Thr-482, Thr-517, and Thr-566 each carry phosphothreonine. An interaction with SKI and SMAD1 region spans residues 539-816; sequence THVKSCFQNM…KENTPPRCAM (278 aa). The tract at residues 595–772 is interaction with DAZAP2; it reads PSAASMAAVA…MRQQPTSTTS (178 aa). Ser-607 and Ser-641 each carry phosphoserine. Thr-660 is subject to Phosphothreonine. Positions 724–869 are interaction with POU4F1; the sequence is RNTHAHGSHY…ITISSDTDEE (146 aa). Positions 746–848 are interaction with CTBP1; that stretch reads HVTLPAAQPL…TRERQRQTIV (103 aa). Positions 759-869 are interaction with HMGA1; the sequence is VAHVMRQQPT…ITISSDTDEE (111 aa). The segment at 764–820 is disordered; that stretch reads RQQPTSTTSSRKSKQHQPSMRNVSTCEVTSSQSTSSPQRSKRVKENTPPRCAMVHSS. Over residues 765–791 the composition is skewed to polar residues; that stretch reads QQPTSTTSSRKSKQHQPSMRNVSTCEV. The short motif at 774 to 777 is the Nuclear localization signal 1 (NLS1) element; it reads RKSK. Phosphoserine is present on residues Ser-787 and Ser-799. A compositionally biased stretch (low complexity) spans 792–801; sequence TSSQSTSSPQ. Positions 804 to 807 match the Nuclear localization signal 2 (NLS2) motif; sequence KRVK. The tract at residues 812 to 907 is interaction with TP53 and TP73; it reads PRCAMVHSSP…YSDSSSNTSP (96 aa). Residues 845 to 879 are interaction with UBE2I; the sequence is QTIVIPDTPSPTVSVITISSDTDEEEEQKHAPTST. The localization to nuclear speckles stretch occupies residues 845 to 952; it reads QTIVIPDTPS…PLKTQASEVL (108 aa). Residues 845-952 are required for localization to nuclear speckles; sequence QTIVIPDTPS…PLKTQASEVL (108 aa). An interaction with UBL1 region spans residues 854 to 876; sequence SPTVSVITISSDTDEEEEQKHAP. An SUMO interaction motifs (SIM); required for nuclear localization and kinase activity region spans residues 856-880; that stretch reads TVSVITISSDTDEEEEQKHAPTSTV. The tract at residues 894–936 is disordered; it reads HDSPYSDSSSNTSPYSVQQRTGHNGTNTLDTKGALENHCTGNP. A compositionally biased stretch (low complexity) spans 895–909; sequence DSPYSDSSSNTSPYS. A Phosphoserine modification is found at Ser-906. Positions 907-1022 are interaction with AXIN1; that stretch reads PYSVQQRTGH…LSQAQPHMAT (116 aa). The segment covering 910–923 has biased composition (polar residues); sequence VQQRTGHNGTNTLD. Glycyl lysine isopeptide (Lys-Gly) (interchain with G-Cter in SUMO2) cross-links involve residues Lys-925 and Lys-945. The segment at 956–1168 is autoinhibitory domain (AID); that stretch reads DSLGPAVSTG…PAKVNQYPYI (213 aa). The interval 960–1030 is disordered; sequence PAVSTGHHSS…ATDRTGSHRR (71 aa). A Phosphoserine modification is found at Ser-963. Composition is skewed to low complexity over residues 965 to 991 and 998 to 1018; these read GHHSSSFKCKSSSTVTSTSGHSSGSSS and QQRPGPHFQQQQPLNLSQAQP. Ser-1014, Ser-1125, and Ser-1158 each carry phosphoserine. A Glycyl lysine isopeptide (Lys-Gly) (interchain with G-Cter in SUMO) cross-link involves residue Lys-1161.

It belongs to the protein kinase superfamily. CMGC Ser/Thr protein kinase family. HIPK subfamily. Interacts with CREB1, SIAH1, WSB1, CBX4, TRADD, p53/TP53, TP73, TP63, CREBBP, DAXX, P53DINP1, SKI, SMAD1, SMAD2 and SMAD3, but not SMAD4. Interacts with ATF1, PML, RUNX1, EP300, NKX1-2, NKX2-5, UBE2I, HMGA1, CTBP1, AXIN1, NLK, MYB, POU4F1, POU4F2, POU4F3, UBE2I, UBL1 and ZBTB4. Probably part of a complex consisting of p53/TP53, HIPK2 and AXIN1. Interacts with SP100; positively regulates TP53-dependent transcription. Interacts with DAZAP2; the interaction results in phosphorylation of DAZAP2 which causes localization of DAZAP2 to the nucleus, reduces interaction of DAZAP2 with HIPK2 and prevents DAZAP2-dependent degradation of HIPK2. Interacts with SIAH1; the interaction is promoted by DAZAP2 and results in SIAH1-mediated ubiquitination and subsequent proteasomal degradation of HIPK2. Post-translationally, autophosphorylation at Tyr-361 in the activation loop activates the kinase and promotes nuclear localization. Sumoylated. When conjugated it is directed to nuclear speckles. Desumoylated by SENP1. Sumoylation on Lys-32 is promoted by the E3 SUMO-protein ligase CBX4. In terms of processing, ubiquitinated by FBXO3, WSB1 and SIAH1, leading to rapid proteasome-dependent degradation. The degradation mediated by FBXO3, but not ubiquitination, is prevented in the presence of PML. The degradation mediated by WSB1 and SIAH1 is reversibly reduced upon DNA damage. Post-translationally, cleaved at Asp-895 and Asp-956 by CASP6 in a p53/TP53-dependent manner. The cleaved form lacks the autoinhibitory C-terminal domain (AID), resulting in a hyperactive kinase, which potentiates p53/TP53 Ser-46 phosphorylation and subsequent activation of the cell death machinery.

The protein resides in the nucleus. The protein localises to the PML body. Its subcellular location is the cytoplasm. The catalysed reaction is L-seryl-[protein] + ATP = O-phospho-L-seryl-[protein] + ADP + H(+). It catalyses the reaction L-threonyl-[protein] + ATP = O-phospho-L-threonyl-[protein] + ADP + H(+). Functionally, serine/threonine-protein kinase involved in transcription regulation, p53/TP53-mediated cellular apoptosis and regulation of the cell cycle. Acts as a corepressor of several transcription factors, including SMAD1 and POU4F1/Brn3a and probably NK homeodomain transcription factors. Phosphorylates PDX1, ATF1, PML, p53/TP53, CREB1, CTBP1, CBX4, RUNX1, EP300, CTNNB1, HMGA1, ZBTB4 and DAZAP2. Inhibits cell growth and promotes apoptosis through the activation of p53/TP53 both at the transcription level and at the protein level (by phosphorylation and indirect acetylation). The phosphorylation of p53/TP53 may be mediated by a p53/TP53-HIPK2-AXIN1 complex. Involved in the response to hypoxia by acting as a transcriptional co-suppressor of HIF1A. Mediates transcriptional activation of TP73. In response to TGFB, cooperates with DAXX to activate JNK. Negative regulator through phosphorylation and subsequent proteasomal degradation of CTNNB1 and the antiapoptotic factor CTBP1. In the Wnt/beta-catenin signaling pathway acts as an intermediate kinase between MAP3K7/TAK1 and NLK to promote the proteasomal degradation of MYB. Phosphorylates CBX4 upon DNA damage and promotes its E3 SUMO-protein ligase activity. Activates CREB1 and ATF1 transcription factors by phosphorylation in response to genotoxic stress. In response to DNA damage, stabilizes PML by phosphorylation. PML, HIPK2 and FBXO3 may act synergically to activate p53/TP53-dependent transactivation. Promotes angiogenesis, and is involved in erythroid differentiation, especially during fetal liver erythropoiesis. Phosphorylation of RUNX1 and EP300 stimulates EP300 transcription regulation activity. Triggers ZBTB4 protein degradation in response to DNA damage. In response to DNA damage, phosphorylates DAZAP2 which localizes DAZAP2 to the nucleus, reduces interaction of DAZAP2 with HIPK2 and prevents DAZAP2-dependent ubiquitination of HIPK2 by E3 ubiquitin-protein ligase SIAH1 and subsequent proteasomal degradation. Modulates HMGA1 DNA-binding affinity. In response to high glucose, triggers phosphorylation-mediated subnuclear localization shifting of PDX1. Involved in the regulation of eye size, lens formation and retinal lamination during late embryogenesis. This is Homeodomain-interacting protein kinase 2 (Hipk2) from Mesocricetus auratus (Golden hamster).